The chain runs to 629 residues: DNA topoisomerase 4 subunit B (629 aa).

ATP-binding positions include Tyr4, Asn41, Asp68, 109-115, and Lys333; that span reads GLHGVGI. The Toprim domain maps to 411 to 524; sequence AELFLVEGDS…AGHVYVAMPP (114 aa). The Mg(2+) site is built by Glu417, Asp489, and Asp491.

This sequence belongs to the type II topoisomerase family. ParE type 1 subfamily. Heterotetramer composed of ParC and ParE. Mg(2+) serves as cofactor. Requires Mn(2+) as cofactor. Ca(2+) is required as a cofactor.

It carries out the reaction ATP-dependent breakage, passage and rejoining of double-stranded DNA.. Its function is as follows. Topoisomerase IV is essential for chromosome segregation. It relaxes supercoiled DNA. Performs the decatenation events required during the replication of a circular DNA molecule. The chain is DNA topoisomerase 4 subunit B from Pseudomonas aeruginosa (strain ATCC 15692 / DSM 22644 / CIP 104116 / JCM 14847 / LMG 12228 / 1C / PRS 101 / PAO1).